A 98-amino-acid chain; its full sequence is Large ribosomal subunit protein eL21 (98 aa).

The tract at residues 1–22 is disordered; it reads MVQMSEGFRRKTRKKLSKHPRE. Over residues 10 to 21 the composition is skewed to basic residues; sequence RKTRKKLSKHPR.

It belongs to the eukaryotic ribosomal protein eL21 family.

In Methanocaldococcus jannaschii (strain ATCC 43067 / DSM 2661 / JAL-1 / JCM 10045 / NBRC 100440) (Methanococcus jannaschii), this protein is Large ribosomal subunit protein eL21 (rpl21e).